A 308-amino-acid chain; its full sequence is Aspartate carbamoyltransferase catalytic subunit (308 aa).

Residues Arg-55 and Thr-56 each contribute to the carbamoyl phosphate site. Lys-83 lines the L-aspartate pocket. Positions 105, 133, and 136 each coordinate carbamoyl phosphate. L-aspartate-binding residues include Arg-166 and Arg-220. Carbamoyl phosphate contacts are provided by Gly-261 and Pro-262.

Belongs to the aspartate/ornithine carbamoyltransferase superfamily. ATCase family. As to quaternary structure, heterododecamer (2C3:3R2) of six catalytic PyrB chains organized as two trimers (C3), and six regulatory PyrI chains organized as three dimers (R2).

The catalysed reaction is carbamoyl phosphate + L-aspartate = N-carbamoyl-L-aspartate + phosphate + H(+). Its pathway is pyrimidine metabolism; UMP biosynthesis via de novo pathway; (S)-dihydroorotate from bicarbonate: step 2/3. Its function is as follows. Catalyzes the condensation of carbamoyl phosphate and aspartate to form carbamoyl aspartate and inorganic phosphate, the committed step in the de novo pyrimidine nucleotide biosynthesis pathway. This chain is Aspartate carbamoyltransferase catalytic subunit, found in Chlorobaculum tepidum (strain ATCC 49652 / DSM 12025 / NBRC 103806 / TLS) (Chlorobium tepidum).